The following is a 1285-amino-acid chain: ABC-type transporter fsqE (1285 aa).

An ABC transmembrane type-1 1 domain is found at 54–343 (VSSICAVLAG…IAPSAQALLS (290 aa)). 6 helical membrane-spanning segments follow: residues 57–77 (ICAV…GLLV), 102–122 (LYYV…TVGF), 176–196 (LAVM…AFIM), 203–223 (IISP…AYMV), 281–301 (VAGM…LAFW), and 312–332 (MSVA…FAII). The ABC transporter 1 domain maps to 380–622 (LDRVGLIYPS…NGAYAALVQK (243 aa)). ATP is bound at residue 413-420 (GSSGSGKS). Asn-467 is a glycosylation site (N-linked (GlcNAc...) asparagine). The tract at residues 627–654 (DTHDHKAPDGARLSIEDDDDEDSRYGGN) is disordered. Helical transmembrane passes span 707–727 (LFGL…SVFF), 753–773 (GLYV…EIAL), 831–851 (GILT…AIGW), 855–875 (LVCT…LQVL), 931–951 (ILLA…CAAL), and 968–988 (FQVY…GSIF). The 284-residue stretch at 713 to 996 (AILAGLTIPV…IFTYAPDASK (284 aa)) folds into the ABC transmembrane type-1 2 domain. N-linked (GlcNAc...) asparagine glycosylation occurs at Asn-1037. The region spanning 1043 to 1281 (VEFEHVSFTY…RGKYWEMVSM (239 aa)) is the ABC transporter 2 domain. 1078–1085 (GQSGSGKS) contacts ATP. N-linked (GlcNAc...) asparagine glycosylation occurs at Asn-1138.

The protein belongs to the ABC transporter superfamily. ABCB family. Multidrug resistance exporter (TC 3.A.1.201) subfamily.

The protein resides in the membrane. It participates in secondary metabolite biosynthesis. In terms of biological role, ABC-type transporter; part of the gene cluster that mediates the biosynthesis of the isoquinoline alkaloids fumisoquin A, fumisoquin B and fumisoquin C; as well as small amounts of fumipyrrole as a shunt metabolite. The products of the cluster lead to a brown coloration and are important for growth and conidiation. FsqE possibly plays a role of self-protection. This is ABC-type transporter fsqE from Aspergillus fumigatus (strain ATCC MYA-4609 / CBS 101355 / FGSC A1100 / Af293) (Neosartorya fumigata).